The sequence spans 178 residues: Orotate phosphoribosyltransferase (178 aa).

5-phospho-alpha-D-ribose 1-diphosphate is bound by residues arginine 92, lysine 93, lysine 96, and 118 to 126; that span reads EDVITTGSS. Orotate contacts are provided by threonine 122 and arginine 150.

It belongs to the purine/pyrimidine phosphoribosyltransferase family. PyrE subfamily. Homodimer. It depends on Mg(2+) as a cofactor.

The enzyme catalyses orotidine 5'-phosphate + diphosphate = orotate + 5-phospho-alpha-D-ribose 1-diphosphate. It functions in the pathway pyrimidine metabolism; UMP biosynthesis via de novo pathway; UMP from orotate: step 1/2. Its function is as follows. Catalyzes the transfer of a ribosyl phosphate group from 5-phosphoribose 1-diphosphate to orotate, leading to the formation of orotidine monophosphate (OMP). The protein is Orotate phosphoribosyltransferase of Archaeoglobus fulgidus (strain ATCC 49558 / DSM 4304 / JCM 9628 / NBRC 100126 / VC-16).